The chain runs to 274 residues: 2-succinyl-6-hydroxy-2,4-cyclohexadiene-1-carboxylate synthase (274 aa).

Belongs to the AB hydrolase superfamily. MenH family. Monomer.

It catalyses the reaction 5-enolpyruvoyl-6-hydroxy-2-succinyl-cyclohex-3-ene-1-carboxylate = (1R,6R)-6-hydroxy-2-succinyl-cyclohexa-2,4-diene-1-carboxylate + pyruvate. It participates in quinol/quinone metabolism; 1,4-dihydroxy-2-naphthoate biosynthesis; 1,4-dihydroxy-2-naphthoate from chorismate: step 3/7. It functions in the pathway quinol/quinone metabolism; menaquinone biosynthesis. Functionally, catalyzes a proton abstraction reaction that results in 2,5-elimination of pyruvate from 2-succinyl-5-enolpyruvyl-6-hydroxy-3-cyclohexene-1-carboxylate (SEPHCHC) and the formation of 2-succinyl-6-hydroxy-2,4-cyclohexadiene-1-carboxylate (SHCHC). The polypeptide is 2-succinyl-6-hydroxy-2,4-cyclohexadiene-1-carboxylate synthase (Yersinia enterocolitica serotype O:8 / biotype 1B (strain NCTC 13174 / 8081)).